The chain runs to 423 residues: Glutamate-1-semialdehyde 2,1-aminomutase (423 aa).

Lys263 bears the N6-(pyridoxal phosphate)lysine mark.

The protein belongs to the class-III pyridoxal-phosphate-dependent aminotransferase family. HemL subfamily. Pyridoxal 5'-phosphate serves as cofactor.

It is found in the cytoplasm. It carries out the reaction (S)-4-amino-5-oxopentanoate = 5-aminolevulinate. Its pathway is porphyrin-containing compound metabolism; protoporphyrin-IX biosynthesis; 5-aminolevulinate from L-glutamyl-tRNA(Glu): step 2/2. The protein is Glutamate-1-semialdehyde 2,1-aminomutase of Ignicoccus hospitalis (strain KIN4/I / DSM 18386 / JCM 14125).